Here is a 186-residue protein sequence, read N- to C-terminus: TATA-box-binding protein D (186 aa).

Repeat copies occupy residues 10-86 (IENV…VEDL) and 101-179 (VQNI…HERL).

It belongs to the TBP family.

General factor that plays a role in the activation of archaeal genes transcribed by RNA polymerase. Binds specifically to the TATA box promoter element which lies close to the position of transcription initiation. This chain is TATA-box-binding protein D (tbpD), found in Halobacterium salinarum (strain ATCC 700922 / JCM 11081 / NRC-1) (Halobacterium halobium).